Here is a 325-residue protein sequence, read N- to C-terminus: MTATATPVPTVASHAQDITLPPPPKGDITTPILFAQDFQKPSTGYMFIKNPPPAGVPYTNIRGEPAMVTVEDLRGKENSVNLDRDSLQVLQGLTDVPRSPEVNWNSVESVEKTFYPAVEAAIKSAIPGAHTVHIFRHGIRHTQNWPVPYNPPAMIAHLDQTGPAAINRVLRHMGPVEGPRLLQGRYRIVHFWTPLNGPVYTCPVAVASSATVKDNDIQIFVSHLGGIGGLDMPLGRPVAKPDASEQYREDFGAPRYADGQRWFYLSGITQDEALLIQIFDSNALQKDSTVQGGRAVHSAFRDPRTPQGAPDRWSIEVSCLVFSDE.

Over residues 1-12 (MTATATPVPTVA) the composition is skewed to low complexity. The segment at 1–25 (MTATATPVPTVASHAQDITLPPPPK) is disordered.

This sequence belongs to the asaB hydroxylase/desaturase family.

Its pathway is secondary metabolite biosynthesis. In terms of biological role, hydroxylase/desaturase; part of the gene cluster that mediates the biosynthesis of oxaleimides, cytotoxic compounds containing an unusual disubstituted succinimide moiety. The first step of the pathway is provided by the HR-PKS poxF that serves in a new mode of collaborative biosynthesis with the PKS-NRPS poxE, by providing the olefin containing amino acid substrate via the synthesis of an ACP-bound dec-4-enoate. The cytochrome P450 monooxygenase poxM-catalyzed oxidation at the alpha-position creates the enzyme-bound 2-hydroxydec-4-enoyl-ACP thioester, which may be prone to spontaneous hydrolysis to yield 2-hydroxydec-4-enoic acid due to increased electrophilicity of the carbonyl. 2-hydroxydec-4-enoic acid can then be further oxidized by poxM to yield the alpha-ketoacid 2-oxodec-4-enoicacid, which is reductively aminated by the aminotransferase poxL to yield (S,E)-2-aminodec-4-enoic acid. The Hybrid PKS-NRPS synthetase poxE then performs condensation between the octaketide product of its PKS modules and the amino group of (S,E)-2-aminodec-4-enoic acid which is activated and incorporated by the adenylation domain. The resulting aminoacyl product can be cyclized by the Diels-Alderase PoxQ and reductively released by the reductive (R) domain of poxE to yield an aldehyde intermediate. The released aldehyde is then substrate for a Knoevenagel condensation by the hydrolyase poxO followed by an oxidation at the 5-position of the pyrrolidone ring. The presence of the olefin from the amino acid building block allows for migration of the substituted allyl group to occur. This allylic transposition reaction takes place in a conjugate addition, semipinacol-like fashion to yield a succinimide intermediate. Iterative two-electron oxidations of the C7 methyl of the succinimide intermediate to the carboxylic acid can be catalyzed by one of two remaining cytochrome P450 monooxygenasess poxC or poxD to yield oxaleimide A. Subsequent oxidation yields the maleimide scaffold oxaleimide I. Both oxaleimide A and oxaleimide I can undergo oxidative modifications in the decalin ring to yield the series of products oxaleimides B to H. This is Hydroxylase/desaturase poxK from Penicillium oxalicum (strain 114-2 / CGMCC 5302) (Penicillium decumbens).